The chain runs to 379 residues: MSCPYAGNGNEHDDSAVPLTTEVGKIYGEYLMLDKLLDAQCMLSEEDKRPVHDEHLFIITHQAYELWFKQIIFEFDSIRDMLDAEVIDETKTLEIVKRLHRVVLILKLLVDQVPILETMTPLDFMDFRKYLAPASGFQSLQFRLIENKLGVLTEQRVRYNQKYSDVFSDEEARNSIRNSEKDPSLLELVQRWLERTPGLEESGFNFWAKFQESVDRFLAAQVQSAMEEPVEKAKNYRLMDIEKRREVYRSIFDPAVHDALVRRGDRRFSHRALQGAIMITFYRDEPRFSQPHQLLTLLMDIDSLITKWRYNHVIMVQRMIGSQQLGTGGSSGYQYLRSTLSDRYKVFLDLFNLSTFLIPREAIPPLDETIRKKLINKSV.

Residues 57 to 61 (FIITH) and Arg-128 contribute to the substrate site. His-312 contributes to the heme binding site. Position 327 (Thr-327) interacts with substrate.

This sequence belongs to the tryptophan 2,3-dioxygenase family. As to quaternary structure, homotetramer. Dimer of dimers. Heme serves as cofactor.

It carries out the reaction L-tryptophan + O2 = N-formyl-L-kynurenine. The protein operates within amino-acid degradation; L-tryptophan degradation via kynurenine pathway; L-kynurenine from L-tryptophan: step 1/2. Its pathway is pigment biosynthesis; ommochrome biosynthesis. Its function is as follows. Heme-dependent dioxygenase that catalyzes the oxidative cleavage of the L-tryptophan (L-Trp) pyrrole ring and converts L-tryptophan to N-formyl-L-kynurenine. Catalyzes the oxidative cleavage of the indole moiety. In Drosophila yakuba (Fruit fly), this protein is Tryptophan 2,3-dioxygenase.